We begin with the raw amino-acid sequence, 256 residues long: Thiazole synthase (256 aa).

Catalysis depends on K96, which acts as the Schiff-base intermediate with DXP. Residues G157, A183 to G184, and N205 to T206 each bind 1-deoxy-D-xylulose 5-phosphate.

It belongs to the ThiG family. Homotetramer. Forms heterodimers with either ThiH or ThiS.

The protein localises to the cytoplasm. It catalyses the reaction [ThiS sulfur-carrier protein]-C-terminal-Gly-aminoethanethioate + 2-iminoacetate + 1-deoxy-D-xylulose 5-phosphate = [ThiS sulfur-carrier protein]-C-terminal Gly-Gly + 2-[(2R,5Z)-2-carboxy-4-methylthiazol-5(2H)-ylidene]ethyl phosphate + 2 H2O + H(+). It functions in the pathway cofactor biosynthesis; thiamine diphosphate biosynthesis. Functionally, catalyzes the rearrangement of 1-deoxy-D-xylulose 5-phosphate (DXP) to produce the thiazole phosphate moiety of thiamine. Sulfur is provided by the thiocarboxylate moiety of the carrier protein ThiS. In vitro, sulfur can be provided by H(2)S. This chain is Thiazole synthase, found in Clostridioides difficile (strain 630) (Peptoclostridium difficile).